The primary structure comprises 367 residues: MRKYAKYLPFCLVVPFLAACSSKSTTSAKGKKIKSPFNYLSKDTNGLDILTGQFSHNIDDIWGSNELLVASKKDYVKYTDKYYTRSHISFEDGLITIETLGNQNHLRNSIIHTLLMGADPRGIDLFNSGDTPISKKPFLARQVKDQFGRDIINVAIANDFASHLLQRQLKTRRLQNGRTVTYVTIKMVADHVEVRARKYLPLVRKMAKRYGIETSLIFGIMEVESSFNPYAVSYANAIGLMQVVPRTAGRDIFVRKGMSGQPDRAYLHEPANNIDAGTLYLAILRNEYLDGINDPVSKRYAIISAYNSGAGAVLKVFDADRTSAFNRINQLSSDAVYRVLATAHPSKQARNYLNKVSKARQKYINIR.

Residues 1 to 19 form the signal peptide; the sequence is MRKYAKYLPFCLVVPFLAA. Residue Cys-20 is the site of N-palmitoyl cysteine attachment. The S-diacylglycerol cysteine moiety is linked to residue Cys-20.

The protein belongs to the transglycosylase Slt family.

The protein resides in the cell outer membrane. The catalysed reaction is Exolytic cleavage of the (1-&gt;4)-beta-glycosidic linkage between N-acetylmuramic acid (MurNAc) and N-acetylglucosamine (GlcNAc) residues in peptidoglycan, from either the reducing or the non-reducing ends of the peptidoglycan chains, with concomitant formation of a 1,6-anhydrobond in the MurNAc residue.. Its function is as follows. Murein-degrading enzyme. May play a role in recycling of muropeptides during cell elongation and/or cell division. The chain is Membrane-bound lytic murein transglycosylase C from Haemophilus ducreyi (strain 35000HP / ATCC 700724).